A 245-amino-acid polypeptide reads, in one-letter code: Protein-glutamine gamma-glutamyltransferase (245 aa).

Belongs to the bacillus TGase family.

The catalysed reaction is L-glutaminyl-[protein] + L-lysyl-[protein] = [protein]-L-lysyl-N(6)-5-L-glutamyl-[protein] + NH4(+). In terms of biological role, probably plays a role in the assembly of the spore coat proteins by catalyzing epsilon-(gamma-glutamyl)lysine cross-links. In wild-type spores at 37 degrees Celsius, tgl mediates the cross-linking of GerQ in higher molecular mass forms, probably in cooperation with YabG. The sequence is that of Protein-glutamine gamma-glutamyltransferase (tgl) from Bacillus subtilis (strain 168).